A 453-amino-acid chain; its full sequence is Elongation factor 1-alpha (453 aa).

A tr-type G domain is found at 5-230; the sequence is KTHINIVVIG…DAIVEPKRPH (226 aa). Residues 14-21 form a G1 region; that stretch reads GHVDAGKS. 14–21 contributes to the GTP binding site; that stretch reads GHVDAGKS. The G2 stretch occupies residues 70-74; the sequence is GITID. The tract at residues 91-94 is G3; the sequence is DAPG. GTP-binding positions include 91–95 and 153–156; these read DAPGH and NKMD. The tract at residues 153-156 is G4; it reads NKMD. A G5 region spans residues 194-196; that stretch reads SGW.

It belongs to the TRAFAC class translation factor GTPase superfamily. Classic translation factor GTPase family. EF-Tu/EF-1A subfamily. As to quaternary structure, binds to actin.

It is found in the cytoplasm. This protein promotes the GTP-dependent binding of aminoacyl-tRNA to the A-site of ribosomes during protein biosynthesis. It is also an abundant actin filament bundling protein. This Dictyostelium discoideum (Social amoeba) protein is Elongation factor 1-alpha (eef1a2).